The chain runs to 283 residues: Pantothenate synthetase (283 aa).

Residue 26-33 (MGNLHDGH) participates in ATP binding. The Proton donor role is filled by histidine 33. Residue glutamine 57 participates in (R)-pantoate binding. Position 57 (glutamine 57) interacts with beta-alanine. 148–151 (GKKD) is a binding site for ATP. Glutamine 154 serves as a coordination point for (R)-pantoate. Residues alanine 177 and 185 to 188 (LSSR) contribute to the ATP site.

The protein belongs to the pantothenate synthetase family. Homodimer.

The protein resides in the cytoplasm. The catalysed reaction is (R)-pantoate + beta-alanine + ATP = (R)-pantothenate + AMP + diphosphate + H(+). It participates in cofactor biosynthesis; (R)-pantothenate biosynthesis; (R)-pantothenate from (R)-pantoate and beta-alanine: step 1/1. Catalyzes the condensation of pantoate with beta-alanine in an ATP-dependent reaction via a pantoyl-adenylate intermediate. The sequence is that of Pantothenate synthetase from Delftia acidovorans (strain DSM 14801 / SPH-1).